The primary structure comprises 345 residues: Phosphoribosylformylglycinamidine cyclo-ligase (345 aa).

Belongs to the AIR synthase family.

It localises to the cytoplasm. It catalyses the reaction 2-formamido-N(1)-(5-O-phospho-beta-D-ribosyl)acetamidine + ATP = 5-amino-1-(5-phospho-beta-D-ribosyl)imidazole + ADP + phosphate + H(+). It functions in the pathway purine metabolism; IMP biosynthesis via de novo pathway; 5-amino-1-(5-phospho-D-ribosyl)imidazole from N(2)-formyl-N(1)-(5-phospho-D-ribosyl)glycinamide: step 2/2. This chain is Phosphoribosylformylglycinamidine cyclo-ligase, found in Anaeromyxobacter sp. (strain K).